Here is a 700-residue protein sequence, read N- to C-terminus: Interleukin-1 receptor accessory protein-like 1-B (700 aa).

Residues methionine 1–serine 18 form the signal peptide. Topologically, residues leucine 19–threonine 357 are extracellular. Residues threonine 32–threonine 134 enclose the Ig-like C2-type 1 domain. Cysteine 53 and cysteine 118 are oxidised to a cystine. N-linked (GlcNAc...) asparagine glycosylation is found at asparagine 63, asparagine 122, asparagine 138, asparagine 213, asparagine 264, and asparagine 331. Ig-like C2-type domains follow at residues cysteine 143–threonine 232 and proline 242–serine 350. Cysteine 164 and cysteine 216 are joined by a disulfide. Cysteine 267 and cysteine 334 form a disulfide bridge. A helical membrane pass occupies residues valine 358–tyrosine 378. Over lysine 379–tryptophan 700 the chain is Cytoplasmic. In terms of domain architecture, TIR spans lysine 403–methionine 559. The active site involves glutamate 491. A required for synaptic vesicle accumulation during synaptogenesis region spans residues proline 564 to tryptophan 700.

Belongs to the interleukin-1 receptor family.

The protein resides in the cell membrane. It is found in the cytoplasm. It carries out the reaction NAD(+) + H2O = ADP-D-ribose + nicotinamide + H(+). May regulate secretion and presynaptic differentiation through inhibition of the activity of N-type voltage-gated calcium channel. During presynaptic differentiation may regulate both synaptic vesicle accumulation in axon terminals and subsequent axon terminal remodeling. This Danio rerio (Zebrafish) protein is Interleukin-1 receptor accessory protein-like 1-B (il1rapl1b).